The primary structure comprises 208 residues: Putative dioxygenase RT0384 (208 aa).

Belongs to the intradiol ring-cleavage dioxygenase family.

In Rickettsia typhi (strain ATCC VR-144 / Wilmington), this protein is Putative dioxygenase RT0384.